The primary structure comprises 2462 residues: Piezo-type mechanosensitive ion channel homolog (2462 aa).

Helical transmembrane passes span 5–25, 27–47, 57–77, 105–125, 163–183, 207–227, 248–268, 325–345, 347–367, 374–394, 404–424, 467–487, 502–522, 554–574, 653–673, 694–714, 730–750, 792–812, and 826–846; these read LVGF…WSVI, FLDL…GYRF, IFIF…IWAA, TVMY…ADIY, AVQL…FFIG, LYIY…PINF, EGPD…LSYV, FFTY…FHFA, LCAF…PSLF, GLLL…NVAF, FGLG…FLYL, LIFL…IFFL, SLIL…IDLV, IALL…LFSF, VYLV…LLWI, AVLV…QLWL, APLL…QLYS, FYAS…GLVI, and SFLI…LWGM. Residues 927-947 are disordered; it reads ASVSSSNGENPSSTDHASISM. Residues 928–939 show a composition bias toward low complexity; that stretch reads SVSSSNGENPSS. Helical transmembrane passes span 1027-1047, 1050-1070, 1078-1098, 1143-1160, 1204-1224, 1228-1248, 1260-1280, and 1310-1330; these read FWIE…ALLL, FALL…CVLL, LWPV…VATW, TLIS…KLRA, LYCY…TGTL, ILHL…LEIL, VYNF…VGNF, and SALV…MFSS. Positions 1347–1400 form a coiled coil; it reads AIVREQEKKAARKTEQLQQIREAEEKKRQRNLQVEKMKSEMLNLRVQLHRMNSD. A disordered region spans residues 1543-1583; sequence SDTNEQSSVDDEVYDEMESQKRKHTPFERSTSLQSDRSSDG. Residues 1550–1559 are compositionally biased toward acidic residues; sequence SVDDEVYDEM. The span at 1570–1583 shows a compositional bias: polar residues; the sequence is ERSTSLQSDRSSDG. A run of 8 helical transmembrane segments spans residues 1611 to 1631, 1647 to 1667, 1916 to 1936, 1956 to 1976, 1984 to 2004, 2012 to 2032, 2130 to 2150, and 2369 to 2389; these read FIIA…AALF, VIML…QIII, YIFG…QSVI, FVII…IYLC, VYYL…AWSI, AGLA…LQAI, GICL…MYSS, and FLGD…FVLA.

The protein belongs to the PIEZO (TC 1.A.75) family.

The protein localises to the membrane. Functionally, pore-forming subunit of a mechanosensitive non-specific cation channel, that conducts both sodium and potassium ions. The polypeptide is Piezo-type mechanosensitive ion channel homolog (Arabidopsis thaliana (Mouse-ear cress)).